The primary structure comprises 254 residues: VVTITLNLANPSKGQYSSFVDRIRNNVRDPKLKYGGTDIAVIGAPPTREKYLRINLQGPRGTVSLGLRRENLYVVAYLAMDNTNTNKAYYFRNQITSAELRTVFPEATATNQIVIQYGEDYQSIERNAQITQGSQSRKELGLGIDLLVTSIDGVNRKARVVRNEARFLLIAIQMTAEAARFRYIQNLVTFNFPKKFDSDNKVIQFEVSWGKISRAIYGDCKNGVFNKDYDFGFGKVRQAKQLQMGLLMYLGRPG.

Belongs to the ribosome-inactivating protein family. Type 1 RIP subfamily. In terms of tissue distribution, expressed in seeds; most abundant in the perisperm.

The enzyme catalyses Endohydrolysis of the N-glycosidic bond at one specific adenosine on the 28S rRNA.. Exhibits N-glycosylase activity. Catalyzes the release of one adenine from a ribosome. Acts as a ribosome-inactivating protein and inhibits protein synthesis. Induces cell death in Huh-7 liver cells. May contribute to the protection against plant pests and predators or play a role in regulating the death of plant cells. In Gypsophila vaccaria (Cow soapwort), this protein is rRNA N-glycosylase sapovaccarin-S2.